Here is a 281-residue protein sequence, read N- to C-terminus: 4-diphosphocytidyl-2-C-methyl-D-erythritol kinase (281 aa).

Residue Lys-15 is part of the active site. Residue Pro-98–Ser-108 participates in ATP binding. Asp-140 is a catalytic residue.

This sequence belongs to the GHMP kinase family. IspE subfamily.

The catalysed reaction is 4-CDP-2-C-methyl-D-erythritol + ATP = 4-CDP-2-C-methyl-D-erythritol 2-phosphate + ADP + H(+). Its pathway is isoprenoid biosynthesis; isopentenyl diphosphate biosynthesis via DXP pathway; isopentenyl diphosphate from 1-deoxy-D-xylulose 5-phosphate: step 3/6. Catalyzes the phosphorylation of the position 2 hydroxy group of 4-diphosphocytidyl-2C-methyl-D-erythritol. This Neisseria meningitidis serogroup A / serotype 4A (strain DSM 15465 / Z2491) protein is 4-diphosphocytidyl-2-C-methyl-D-erythritol kinase.